The sequence spans 341 residues: uncharacterized protein (341 aa).

The stretch at 153-179 forms a coiled coil; the sequence is AYTLSEKVMNAEREAEETRETIIREAH. The segment covering 319–335 has biased composition (polar residues); it reads EQLQNPAPESAPSTSKT. Residues 319–341 are disordered; it reads EQLQNPAPESAPSTSKTLRSKNP.

This is an uncharacterized protein from Coxiella burnetii (strain RSA 493 / Nine Mile phase I).